Reading from the N-terminus, the 207-residue chain is Ras-related protein Rab-8A (207 aa).

GTP is bound by residues Ser17, Gly18, Val19, Gly20, Lys21, Thr22, Cys23, Ser35, Ser39, and Thr40. Residue Thr22 coordinates Mg(2+). 2 consecutive short sequence motifs (switch) follow at residues 31 to 45 and 63 to 80; these read DAFNSTFISTIGIDF and DTAGQERFRTITTAYYRG. 2 residues coordinate Mg(2+): Thr40 and Asp63. Position 66 (Gly66) interacts with GTP. Position 72 is a phosphothreonine (Thr72). GTP-binding residues include Asn121, Lys122, Asp124, Ala152, and Lys153. Phosphoserine is present on residues Ser181 and Ser185. Cys204 carries the cysteine methyl ester modification. Residue Cys204 is the site of S-geranylgeranyl cysteine attachment. A propeptide spans 205–207 (removed in mature form); the sequence is VLL.

It belongs to the small GTPase superfamily. Rab family. As to quaternary structure, interacts (GTP-bound form) with MICALL1; regulates RAB8A association with recycling endosomes. Interacts with MICALL2; competes with RAB13 and is involved in E-cadherin endocytic recycling. Interacts (GTP-bound form) with MICAL1, MICALCL, MICAL3, EHBP1 and EHBP1L1; at least in case of MICAL1, MICALCL, MICAL3 and EHBP1L1 two molecules of RAB8A can bind to one molecule of the effector protein; ternary complexes of RAB8A, RAB13 and either MICAL1 or EHBP1L1 are possible. Interacts with EHD1. Interacts with MAP4K2 and SYTL4. Interacts with SGSM1 and SGSM3. Interacts with RABIF, RIMS2, RPH3A and RPH3A. Interacts with OPTN. Interacts with RAB3IP, RAB3IP functions as guanine exchange factor (GEF). Interacts with MYO5B. Interacts with CIMAP3. Interacts with BIRC6/bruce. Interacts with OCRL. Interacts with AHI1. Interacts with DCDC1. Interacts with LRRK2; interaction facilitates phosphorylation of Thr-72. Interacts with RAB31P, GDI1, GDI2, CHM, CHML, RABGGTA, RABGGTB, TBC1D15 and INPP5B; these interactions are dependent on Thr-72 not being phosphorylated. Interacts with RILPL1 and RILPL2; these interactions are dependent on the phosphorylation of Thr-72 by LRRK2. Interacts with DZIP1; prevents inhibition by the GDP-dissociation inhibitor GDI2. Interacts (in GDP-bound form) with RAB3IP/Rabin8, RAB3IP functions as guanine exchange factor (GEF) towards RAB8A. Interacts (in GDP-bound form) with RPGR, RPGR functions as GEF towards RAB8A. Mg(2+) is required as a cofactor. Post-translationally, phosphorylation of Thr-72 in the switch II region by LRRK2 prevents the association of RAB regulatory proteins, including CHM, CHML and RAB GDP dissociation inhibitors GDI1 and GDI2. Phosphorylation by LRRK2 is required for localization to stressed lysosomes.

Its subcellular location is the cell membrane. The protein resides in the golgi apparatus. It localises to the endosome membrane. It is found in the recycling endosome membrane. The protein localises to the cell projection. Its subcellular location is the cilium. The protein resides in the cytoplasmic vesicle. It localises to the phagosome membrane. It is found in the cytoplasm. The protein localises to the cytoskeleton. Its subcellular location is the microtubule organizing center. The protein resides in the centrosome. It localises to the centriole. It is found in the cilium basal body. The protein localises to the midbody. Its subcellular location is the lysosome. It carries out the reaction GTP + H2O = GDP + phosphate + H(+). Regulated by guanine nucleotide exchange factors (GEFs) such as RAB3IP/Rabin8 and RPGR which promote the exchange of bound GDP for free GTP, GTPase activating proteins (GAPs) which increase the GTP hydrolysis activity, and GDP dissociation inhibitors (GDIs) which inhibit the dissociation of the nucleotide from the GTPase. Activated in response to insulin. Its function is as follows. The small GTPases Rab are key regulators of intracellular membrane trafficking, from the formation of transport vesicles to their fusion with membranes. Rabs cycle between an inactive GDP-bound form and an active GTP-bound form that is able to recruit to membranes different sets of downstream effectors directly responsible for vesicle formation, movement, tethering and fusion. RAB8A is involved in polarized vesicular trafficking and neurotransmitter release. Together with RAB11A, RAB3IP, the exocyst complex, PARD3, PRKCI, ANXA2, CDC42 and DNMBP promotes transcytosis of PODXL to the apical membrane initiation sites (AMIS), apical surface formation and lumenogenesis. Regulates the compacted morphology of the Golgi. Together with MYO5B and RAB11A participates in epithelial cell polarization. Also involved in membrane trafficking to the cilium and ciliogenesis. Together with MICALL2, may also regulate adherens junction assembly. May play a role in insulin-induced transport to the plasma membrane of the glucose transporter GLUT4 and therefore play a role in glucose homeostasis. Involved in autophagy. Participates in the export of a subset of neosynthesized proteins through a Rab8-Rab10-Rab11-dependent endososomal export route. Targeted to and stabilized on stressed lysosomes through LRRK2 phosphorylation. Suppresses stress-induced lysosomal enlargement through EHBP1 and EHNP1L1 effector proteins. In Bos taurus (Bovine), this protein is Ras-related protein Rab-8A (RAB8A).